The chain runs to 552 residues: Leucine-rich repeat-containing protein 31 (552 aa).

Positions 1–65 (MSQTRKKTSS…SETAKPLSSE (65 aa)) are disordered. Over residues 31–41 (ESRKEDNDLKT) the composition is skewed to basic and acidic residues. Over residues 42–58 (SDSQPSDWIQKTATSET) the composition is skewed to polar residues. 9 LRR repeats span residues 227–246 (SLEV…LNSI), 255–275 (NLKV…KILD), 283–293 (ELRKLDLSCNK), 311–331 (HLQV…MSLT), 339–360 (NLQE…NLLS), 367–387 (ALKS…TALA), 395–415 (ALEV…KLLL), 423–443 (SLQV…ALLA), and 453–475 (KLQK…MFCQ).

This Homo sapiens (Human) protein is Leucine-rich repeat-containing protein 31 (LRRC31).